A 158-amino-acid polypeptide reads, in one-letter code: Transcription elongation factor GreB (158 aa).

The protein belongs to the GreA/GreB family. GreB subfamily.

Functionally, necessary for efficient RNA polymerase transcription elongation past template-encoded arresting sites. The arresting sites in DNA have the property of trapping a certain fraction of elongating RNA polymerases that pass through, resulting in locked ternary complexes. Cleavage of the nascent transcript by cleavage factors such as GreA or GreB allows the resumption of elongation from the new 3'terminus. GreB releases sequences of up to 9 nucleotides in length. The polypeptide is Transcription elongation factor GreB (Escherichia coli (strain K12)).